A 90-amino-acid chain; its full sequence is Acylphosphatase (90 aa).

The 86-residue stretch at 5-90 (GCKVIVSGIV…YQKTNDFIAC (86 aa)) folds into the Acylphosphatase-like domain. Active-site residues include R20 and N38.

Belongs to the acylphosphatase family.

It carries out the reaction an acyl phosphate + H2O = a carboxylate + phosphate + H(+). The protein is Acylphosphatase (acyP) of Psychromonas ingrahamii (strain DSM 17664 / CCUG 51855 / 37).